The sequence spans 456 residues: MQLEDTIAAIATAIVPQQGSIGVVRLSGPQSLTIAKTLFDAPGNQTWESHRILYGHVRHPQTKAAIDEALLLLMLAPRSYTKEDVVEFQCHGGIMPVQQVLQLCLQQGARLAQPGEFSFRAFLNGRLDLTQAESISELVGAQSPQAAAIALAGLQGKLAQPIRDLRNTCLDILAEVEARIDFEDDLPPLDEDSIRQQLQNLYQQLEDILNTAQRGELLRTGLKVAIVGQPNVGKSSLLNAWSRTDRAIVTDLPGTTRDVVESQLVVEGIPIQVLDTAGIRETADQVEQIGVERSRKAAQQADLVLLTVDAHQGWTEADQLIYEQVKDRPLILVINKIDLGRADLVSYPPEITNTVLTAAAANLGIEALENAIIEQVNQTNLSPQNLDFAINQRQEAVLTEAQLALKQLQQTMAEQLPLDFWTIDLRLAINALGQVTGETVTESVLDRIFSRFCIGK.

3 residues coordinate (6S)-5-formyl-5,6,7,8-tetrahydrofolate: R25, E87, and R126. Positions 221–377 constitute a TrmE-type G domain; that stretch reads GLKVAIVGQP…LENAIIEQVN (157 aa). Position 231 (N231) interacts with K(+). GTP contacts are provided by residues 231–236, 250–256, and 275–278; these read NVGKSS, TDLPGTT, and DTAG. S235 lines the Mg(2+) pocket. K(+) is bound by residues T250, L252, and T255. T256 contacts Mg(2+). Position 456 (K456) interacts with (6S)-5-formyl-5,6,7,8-tetrahydrofolate.

The protein belongs to the TRAFAC class TrmE-Era-EngA-EngB-Septin-like GTPase superfamily. TrmE GTPase family. In terms of assembly, homodimer. Heterotetramer of two MnmE and two MnmG subunits. It depends on K(+) as a cofactor.

The protein resides in the cytoplasm. Its function is as follows. Exhibits a very high intrinsic GTPase hydrolysis rate. Involved in the addition of a carboxymethylaminomethyl (cmnm) group at the wobble position (U34) of certain tRNAs, forming tRNA-cmnm(5)s(2)U34. This chain is tRNA modification GTPase MnmE, found in Synechocystis sp. (strain ATCC 27184 / PCC 6803 / Kazusa).